The primary structure comprises 186 residues: UPF0200 protein PH1008 (186 aa).

7–14 (GMPGSGKG) contributes to the ATP binding site.

Belongs to the UPF0200 family.

The sequence is that of UPF0200 protein PH1008 from Pyrococcus horikoshii (strain ATCC 700860 / DSM 12428 / JCM 9974 / NBRC 100139 / OT-3).